Consider the following 201-residue polypeptide: Cold shock domain-containing protein 4 (201 aa).

An N-acetylserine modification is found at Ser2. Residues 14–81 (RRKGTVKWFD…RPKAIEVSGP (68 aa)) enclose the CSD domain. The disordered stretch occupies residues 66-109 (EVDNSGRPKAIEVSGPDGAPVQGNSGGGGSSGGRGGFGGGGGRG). Residues 89–109 (NSGGGGSSGGRGGFGGGGGRG) show a composition bias toward gly residues. CCHC-type zinc fingers lie at residues 136–153 (NSCF…ECSQ) and 180–197 (LSCY…DCTS).

This sequence belongs to the cold shock protein (CSP) family. Mostly expressed in shoot apices and siliques, and, to a lower extent, in roots, cotyledons, stems, shoots, leaves, floral buds and flowers. Present in shoot apical meristems and siliques (at protein level). Very low levels are observed in cv. Landsberg erecta compared to cv. Columbia.

It localises to the cytoplasm. It is found in the nucleus. The protein resides in the nucleolus. Chaperone that binds to and unwinds RNA and both single-stranded DNA and double-stranded DNA (ssDNA and dsDNA DNA). Regulates the flowering transition and flower and seed development, particularly at late stages of embryo development, through regulation of gene expression (including MEA, FIS2, AP1, CAL, AG and SHP2). In Arabidopsis thaliana (Mouse-ear cress), this protein is Cold shock domain-containing protein 4 (CSP4).